We begin with the raw amino-acid sequence, 137 residues long: uncharacterized protein (137 aa).

This is an uncharacterized protein from Acidianus convivator (ATV).